A 224-amino-acid chain; its full sequence is tRNA pseudouridine synthase B (224 aa).

The active-site Nucleophile is the Asp-46.

This sequence belongs to the pseudouridine synthase TruB family. Type 1 subfamily.

The catalysed reaction is uridine(55) in tRNA = pseudouridine(55) in tRNA. Responsible for synthesis of pseudouridine from uracil-55 in the psi GC loop of transfer RNAs. In Methylococcus capsulatus (strain ATCC 33009 / NCIMB 11132 / Bath), this protein is tRNA pseudouridine synthase B.